The primary structure comprises 236 residues: 2,3,4,5-tetrahydropyridine-2,6-dicarboxylate N-acetyltransferase (236 aa).

This sequence belongs to the transferase hexapeptide repeat family. DapH subfamily.

It catalyses the reaction (S)-2,3,4,5-tetrahydrodipicolinate + acetyl-CoA + H2O = L-2-acetamido-6-oxoheptanedioate + CoA. It functions in the pathway amino-acid biosynthesis; L-lysine biosynthesis via DAP pathway; LL-2,6-diaminopimelate from (S)-tetrahydrodipicolinate (acetylase route): step 1/3. Catalyzes the transfer of an acetyl group from acetyl-CoA to tetrahydrodipicolinate. The sequence is that of 2,3,4,5-tetrahydropyridine-2,6-dicarboxylate N-acetyltransferase from Geobacillus kaustophilus (strain HTA426).